The sequence spans 428 residues: Adenylosuccinate synthetase (428 aa).

GTP-binding positions include 12-18 (GDEGKGK) and 40-42 (GHS). Asp-13 (proton acceptor) is an active-site residue. The Mg(2+) site is built by Asp-13 and Gly-40. IMP is bound by residues 13 to 16 (DEGK), 38 to 41 (NAGH), Thr-128, Arg-142, Gln-223, Thr-238, and Arg-302. Residue His-41 is the Proton donor of the active site. 298-304 (VTTGRPR) contacts substrate. GTP is bound by residues Arg-304, 330 to 332 (KLD), and 412 to 414 (GTG).

The protein belongs to the adenylosuccinate synthetase family. Homodimer. Mg(2+) is required as a cofactor.

The protein resides in the cytoplasm. It catalyses the reaction IMP + L-aspartate + GTP = N(6)-(1,2-dicarboxyethyl)-AMP + GDP + phosphate + 2 H(+). It functions in the pathway purine metabolism; AMP biosynthesis via de novo pathway; AMP from IMP: step 1/2. Plays an important role in the de novo pathway of purine nucleotide biosynthesis. Catalyzes the first committed step in the biosynthesis of AMP from IMP. In Bifidobacterium longum (strain NCC 2705), this protein is Adenylosuccinate synthetase.